A 240-amino-acid polypeptide reads, in one-letter code: uncharacterized protein (240 aa).

Disordered regions lie at residues 99–121 and 136–167; these read EPPT…SPEL and ATVS…KRVH. A compositionally biased stretch (polar residues) spans 137–155; sequence TVSSPTSPRPITTESSRVS.

This is an uncharacterized protein from Ictaluridae (bullhead catfishes).